The primary structure comprises 251 residues: Pyrroloquinoline-quinone synthase (251 aa).

It belongs to the PqqC family.

It catalyses the reaction 6-(2-amino-2-carboxyethyl)-7,8-dioxo-1,2,3,4,7,8-hexahydroquinoline-2,4-dicarboxylate + 3 O2 = pyrroloquinoline quinone + 2 H2O2 + 2 H2O + H(+). The protein operates within cofactor biosynthesis; pyrroloquinoline quinone biosynthesis. Ring cyclization and eight-electron oxidation of 3a-(2-amino-2-carboxyethyl)-4,5-dioxo-4,5,6,7,8,9-hexahydroquinoline-7,9-dicarboxylic-acid to PQQ. The sequence is that of Pyrroloquinoline-quinone synthase from Pseudomonas entomophila (strain L48).